Here is a 278-residue protein sequence, read N- to C-terminus: Tryptophan synthase alpha chain (278 aa).

Active-site proton acceptor residues include E49 and D60.

This sequence belongs to the TrpA family. In terms of assembly, tetramer of two alpha and two beta chains.

It carries out the reaction (1S,2R)-1-C-(indol-3-yl)glycerol 3-phosphate + L-serine = D-glyceraldehyde 3-phosphate + L-tryptophan + H2O. Its pathway is amino-acid biosynthesis; L-tryptophan biosynthesis; L-tryptophan from chorismate: step 5/5. In terms of biological role, the alpha subunit is responsible for the aldol cleavage of indoleglycerol phosphate to indole and glyceraldehyde 3-phosphate. The polypeptide is Tryptophan synthase alpha chain (Corynebacterium diphtheriae (strain ATCC 700971 / NCTC 13129 / Biotype gravis)).